The primary structure comprises 449 residues: Signal recognition particle protein (449 aa).

Residues 109-116 (GLQGGGKT), 191-195 (DTAGR), and 249-252 (SRID) contribute to the GTP site.

Belongs to the GTP-binding SRP family. SRP54 subfamily. In terms of assembly, part of the signal recognition particle protein translocation system, which is composed of SRP and FtsY. SRP is a ribonucleoprotein composed of Ffh and a 4.5S RNA molecule.

The protein resides in the cytoplasm. It catalyses the reaction GTP + H2O = GDP + phosphate + H(+). Functionally, involved in targeting and insertion of nascent membrane proteins into the cytoplasmic membrane. Binds to the hydrophobic signal sequence of the ribosome-nascent chain (RNC) as it emerges from the ribosomes. The SRP-RNC complex is then targeted to the cytoplasmic membrane where it interacts with the SRP receptor FtsY. Interaction with FtsY leads to the transfer of the RNC complex to the Sec translocase for insertion into the membrane, the hydrolysis of GTP by both Ffh and FtsY, and the dissociation of the SRP-FtsY complex into the individual components. This is Signal recognition particle protein from Rickettsia prowazekii (strain Madrid E).